The primary structure comprises 247 residues: Phosphoribosylaminoimidazole-succinocarboxamide synthase (247 aa).

The protein belongs to the SAICAR synthetase family.

The catalysed reaction is 5-amino-1-(5-phospho-D-ribosyl)imidazole-4-carboxylate + L-aspartate + ATP = (2S)-2-[5-amino-1-(5-phospho-beta-D-ribosyl)imidazole-4-carboxamido]succinate + ADP + phosphate + 2 H(+). It participates in purine metabolism; IMP biosynthesis via de novo pathway; 5-amino-1-(5-phospho-D-ribosyl)imidazole-4-carboxamide from 5-amino-1-(5-phospho-D-ribosyl)imidazole-4-carboxylate: step 1/2. The chain is Phosphoribosylaminoimidazole-succinocarboxamide synthase from Gloeobacter violaceus (strain ATCC 29082 / PCC 7421).